Here is a 163-residue protein sequence, read N- to C-terminus: MSFVSKTIIEADHELRYLNGAELEILRAYLNSSEKRIKVIKTLRDREKEIISKASRKLFQIHPDYIGPGGNASGSRQRALCLRDYGWYLRLITYSIIAGDKNPVERIGLLGVRDMYNSLGVPLIGMVDSIQCLKDAALAELKSEEEVKLAEPYFDFVIQNMAQ.

N71 carries the post-translational modification N4-methylasparagine. C81 serves as a coordination point for (2R,3E)-phycocyanobilin.

The protein belongs to the phycobiliprotein family. In terms of processing, contains one covalently linked bilin chromophore.

The protein localises to the plastid. The protein resides in the chloroplast thylakoid membrane. Its function is as follows. Allophycocyanin is a photosynthetic bile pigment-protein complex with maximum absorption at approximately 650 nanometers. This chain is Allophycocyanin alpha-B chain (apcD), found in Cyanidium caldarium (Red alga).